A 359-amino-acid polypeptide reads, in one-letter code: Guanine nucleotide-binding protein G(o) subunit alpha (359 aa).

The segment at 1–26 is disordered; the sequence is MGGCVSATPEEREAKTRSSVIDRQQR. The N-myristoyl glycine moiety is linked to residue glycine 2. Cysteine 4 carries the S-palmitoyl cysteine lipid modification. Residues 34-359 enclose the G-alpha domain; that stretch reads NTIKILLLGA…RENLEAANLL (326 aa). Positions 37–50 are G1 motif; the sequence is KILLLGAGESGKST. GTP-binding positions include 42–49, 178–184, 203–207, 272–275, and alanine 331; these read GAGESGKS, LRSRVQT, DVGGQ, and NKAD. Mg(2+) is bound by residues serine 49 and threonine 184. Residues 176–184 are G2 motif; sequence DVLRSRVQT. The segment at 199–208 is G3 motif; it reads YRVVDVGGQR. Residues 268 to 275 are G4 motif; that stretch reads ILFLNKAD. A G5 motif region spans residues 329-334; sequence TTATDT.

This sequence belongs to the G-alpha family. G(i/o/t/z) subfamily. In terms of assembly, g proteins are composed of 3 units; alpha, beta and gamma. The alpha chain contains the guanine nucleotide binding site.

Guanine nucleotide-binding proteins (G proteins) are involved as modulators or transducers in various transmembrane signaling systems. The G(o) protein function is not clear. The sequence is that of Guanine nucleotide-binding protein G(o) subunit alpha from Geodia cydonium (Sponge).